Reading from the N-terminus, the 466-residue chain is Ribulose bisphosphate carboxylase large chain (466 aa).

N6,N6,N6-trimethyllysine is present on K5. Positions 114 and 164 each coordinate substrate. K166 (proton acceptor) is an active-site residue. K168 is a substrate binding site. Positions 192, 194, and 195 each coordinate Mg(2+). Residue K192 is modified to N6-carboxylysine. The Proton acceptor role is filled by H285. 3 residues coordinate substrate: R286, H318, and S370.

The protein belongs to the RuBisCO large chain family. Type I subfamily. As to quaternary structure, heterohexadecamer of 8 large chains and 8 small chains; disulfide-linked. The disulfide link is formed within the large subunit homodimers. It depends on Mg(2+) as a cofactor. The disulfide bond which can form in the large chain dimeric partners within the hexadecamer appears to be associated with oxidative stress and protein turnover.

The protein resides in the plastid. It localises to the chloroplast. It catalyses the reaction 2 (2R)-3-phosphoglycerate + 2 H(+) = D-ribulose 1,5-bisphosphate + CO2 + H2O. The enzyme catalyses D-ribulose 1,5-bisphosphate + O2 = 2-phosphoglycolate + (2R)-3-phosphoglycerate + 2 H(+). Its function is as follows. RuBisCO catalyzes two reactions: the carboxylation of D-ribulose 1,5-bisphosphate, the primary event in carbon dioxide fixation, as well as the oxidative fragmentation of the pentose substrate in the photorespiration process. Both reactions occur simultaneously and in competition at the same active site. This is Ribulose bisphosphate carboxylase large chain from Berzelia lanuginosa (Buttonbush).